A 541-amino-acid chain; its full sequence is EH domain-containing protein 4 (541 aa).

The residue at position 1 (methionine 1) is an N-acetylmethionine. Residues 1–20 (MFSWMGRQAGGRERSGGMDA) form a disordered region. Phosphoserine is present on serine 15. A Dynamin-type G domain is found at 58 to 289 (FENKPMILLV…DLFRDIQSLP (232 aa)). A G1 motif region spans residues 68 to 75 (GQYSTGKT). 68-75 (GQYSTGKT) is a binding site for ATP. Positions 94 to 95 (EP) are G2 motif. A G3 motif region spans residues 156-159 (DSPG). Serine 162 is subject to Phosphoserine. Residues 222–225 (NKAD) are G4 motif. An ATP-binding site is contributed by lysine 223. Position 246 (valine 246) is a region of interest, G5 motif. Tryptophan 261 is a binding site for ATP. The EH domain maps to 447-535 (DKPVYDELFY…PHLVPPSHRK (89 aa)). Tyrosine 451 carries the phosphotyrosine modification. Serine 459 carries the phosphoserine modification. Residues 479-514 (LPNSVLGKIWKLADCDCDGMLDEEEFALAKHLIKIK) form the EF-hand domain. Positions 492, 494, 496, 498, and 503 each coordinate Ca(2+).

This sequence belongs to the TRAFAC class dynamin-like GTPase superfamily. Dynamin/Fzo/YdjA family. EHD subfamily. In terms of assembly, homooligomer, and heterooligomer with EHD1, EHD2 and EHD3. Forms a complex with EHD4 and MICALL1; the complex controls CDH5 trafficking and coordinates angiogenesis.

It localises to the early endosome membrane. It is found in the recycling endosome membrane. The protein resides in the cell membrane. Its subcellular location is the cell junction. The protein localises to the adherens junction. ATP- and membrane-binding protein that probably controls membrane reorganization/tubulation upon ATP hydrolysis. Plays a role in early endosomal transport. During sprouting angiogenesis, in complex with PACSIN2 and MICALL1, forms recycling endosome-like tubular structure at asymmetric adherens junctions to control CDH5 trafficking. The polypeptide is EH domain-containing protein 4 (Mus musculus (Mouse)).